We begin with the raw amino-acid sequence, 192 residues long: Sarcoplasmic calcium-binding protein, beta chain (192 aa).

An N-acetylalanine modification is found at Ala-1. 4 consecutive EF-hand domains span residues 4–39, 56–91, 100–135, and 136–171; these read WDNRVKYIVRYMYDIDNDGFLDKNDFECLAVRVTLI, IMANLWNEIAELADFNKDGEVTVDEFKQAVQKNCKG, AFKVFIGNQFKTIDVDGDGMVGVDEYRLDCITRSAF, and ADVKEIDDAYDKLCTEEDKKAGGINLARYQELYAQF. Residues Asp-17, Asp-19, Asp-21, Asp-28, Asp-69, Asn-71, Asp-73, Glu-75, Glu-80, Asp-113, Asp-115, Asp-117, Met-119, and Glu-124 each coordinate Ca(2+).

SCPs from crayfish, lobster, and shrimp are polymorphic dimers; three isotypes (alpha-alpha, alpha-beta, and beta-beta) have been identified.

Its function is as follows. Like parvalbumins, SCPs seem to be more abundant in fast contracting muscles, but no functional relationship can be established from this distribution. In Penaeus sp. (Penoeid shrimp), this protein is Sarcoplasmic calcium-binding protein, beta chain.